Reading from the N-terminus, the 162-residue chain is Glutathione peroxidase-like peroxiredoxin 2 (162 aa).

The active-site Cysteine sulfenic acid (-SOH) intermediate is Cys37. The cysteines at positions 37 and 83 are disulfide-linked.

The protein belongs to the glutathione peroxidase family. As to quaternary structure, monomer.

The protein localises to the cytoplasm. Its subcellular location is the nucleus. It is found in the mitochondrion outer membrane. The protein resides in the mitochondrion inner membrane. It carries out the reaction a hydroperoxide + [thioredoxin]-dithiol = an alcohol + [thioredoxin]-disulfide + H2O. Glutathione peroxidase-like protein that protects cells from phospholipid hydroperoxides and nonphospholipid peroxides during oxidative stress. Plays an important role in the oxidative stress-induced response in the presence of Ca(2+). Has peroxidase activity using preferentially thioredoxin as a reducing power. The redox state of the mitochondrial GPX2 is regulated by TRX1 and TRX2 (cytoplasmic thioredoxin), and by TRX3 (mitochondrial matrix thioredoxin). Involved in sporulation. This is Glutathione peroxidase-like peroxiredoxin 2 from Saccharomyces cerevisiae (strain ATCC 204508 / S288c) (Baker's yeast).